A 59-amino-acid chain; its full sequence is Large ribosomal subunit protein bL33 (59 aa).

It belongs to the bacterial ribosomal protein bL33 family.

This is Large ribosomal subunit protein bL33 from Borrelia recurrentis (strain A1).